The chain runs to 644 residues: Keratin, type II cytoskeletal 1 (644 aa).

The tract at residues 2 to 179 (SRQFSSRSGY…DPEIQKVKSR (178 aa)) is head. The residue at position 12 (Arg-12) is an Omega-N-methylarginine. 2 positions are modified to phosphoserine: Ser-18 and Ser-21. A compositionally biased stretch (low complexity) spans 22-38 (AGIINYQRRTTSSSTRR). The disordered stretch occupies residues 22–47 (AGIINYQRRTTSSSTRRSGGGGGRFS). Arg-45 bears the Omega-N-methylarginine mark. Position 66 is a phosphoserine (Ser-66). Omega-N-methylarginine is present on Arg-82. A coil 1A region spans residues 180-215 (EREQIKSLNNQFASFIDKVRFLEQQNQVLQTKWELL). The IF rod domain maps to 180 to 493 (EREQIKSLNN…TLLEGEESRM (314 aa)). The segment at 216 to 234 (QQVDTSTRTHNLEPYFESF) is linker 1. A coil 1B region spans residues 235 to 326 (INNLRRRVDQ…ALYQAELSQM (92 aa)). An N6,N6-dimethyllysine modification is found at Lys-276. The linker 12 stretch occupies residues 327–350 (QTQISETNVILSMDNNRSLDLDSI). Ser-344 carries the phosphoserine modification. Positions 351-489 (IAEVKAQYED…ATYRTLLEGE (139 aa)) are coil 2. Disordered stretches follow at residues 489 to 523 (EESRMSGECAPNVSVSVSTSHTTISGGGSRGGGGG) and 568 to 644 (SGGG…GVTR). The interval 490-644 (ESRMSGECAP…VSTTYSGVTR (155 aa)) is tail. Residues 501 to 511 (VSVSVSTSHTT) are compositionally biased toward low complexity. Gly residues-rich tracts occupy residues 513 to 523 (SGGGSRGGGGG) and 568 to 620 (SGGG…GSSS). Arg-518 and Arg-588 each carry omega-N-methylarginine. A compositionally biased stretch (low complexity) spans 621 to 631 (GGVKSSGGSSS). A compositionally biased stretch (polar residues) spans 632 to 644 (VKFVSTTYSGVTR).

This sequence belongs to the intermediate filament family. Heterotetramer of two type I and two type II keratins. Heterodimer with KRT10. Two heterodimers of KRT1 and KRT10 form a heterotetramer. Forms a heterodimer with KRT14; the interaction is more abundant in the absence of KRT5. Interacts with PLEC isoform 1C, when in a heterodimer with KRT10. Interacts with ITGB1 in the presence of RACK1 and SRC, and with RACK1. Interacts with C1QBP; the association represents a cell surface kininogen receptor. Interacts with EPPK1; interaction is dependent of higher-order structure of intermediate filament. In terms of processing, undergoes deimination of some arginine residues (citrullination). As to expression, the source of this protein is neonatal foreskin. The 67-kDa type II keratins are expressed in terminally differentiating epidermis.

It localises to the cell membrane. The protein resides in the cytoplasm. Its function is as follows. May regulate the activity of kinases such as PKC and SRC via binding to integrin beta-1 (ITB1) and the receptor of activated protein C kinase 1 (RACK1). In complex with C1QBP is a high affinity receptor for kininogen-1/HMWK. The polypeptide is Keratin, type II cytoskeletal 1 (KRT1) (Homo sapiens (Human)).